Consider the following 38-residue polypeptide: MTQSNPNEQNVELNRTSLYWGLLLIFVLAVSFSNYFFN.

Residues 17 to 37 (SLYWGLLLIFVLAVSFSNYFF) traverse the membrane as a helical segment.

The protein belongs to the PsbL family. In terms of assembly, PSII is composed of 1 copy each of membrane proteins PsbA, PsbB, PsbC, PsbD, PsbE, PsbF, PsbH, PsbI, PsbJ, PsbK, PsbL, PsbM, PsbT, PsbX, PsbY, PsbZ, Psb30/Ycf12, at least 3 peripheral proteins of the oxygen-evolving complex and a large number of cofactors. It forms dimeric complexes.

The protein resides in the plastid. The protein localises to the chloroplast thylakoid membrane. One of the components of the core complex of photosystem II (PSII). PSII is a light-driven water:plastoquinone oxidoreductase that uses light energy to abstract electrons from H(2)O, generating O(2) and a proton gradient subsequently used for ATP formation. It consists of a core antenna complex that captures photons, and an electron transfer chain that converts photonic excitation into a charge separation. This subunit is found at the monomer-monomer interface and is required for correct PSII assembly and/or dimerization. This chain is Photosystem II reaction center protein L, found in Amborella trichopoda.